Here is a 181-residue protein sequence, read N- to C-terminus: Large ribosomal subunit protein uL10 (181 aa).

This sequence belongs to the universal ribosomal protein uL10 family. In terms of assembly, part of the ribosomal stalk of the 50S ribosomal subunit. The N-terminus interacts with L11 and the large rRNA to form the base of the stalk. The C-terminus forms an elongated spine to which L12 dimers bind in a sequential fashion forming a multimeric L10(L12)X complex.

In terms of biological role, forms part of the ribosomal stalk, playing a central role in the interaction of the ribosome with GTP-bound translation factors. The protein is Large ribosomal subunit protein uL10 of Bradyrhizobium diazoefficiens (strain JCM 10833 / BCRC 13528 / IAM 13628 / NBRC 14792 / USDA 110).